Consider the following 110-residue polypeptide: METLAQHRHARSSAQKVRLVADLIRGKKVSQALDILTYTNKKAAVLVKKVLESAIANAEHNDGADIDDLKVAKIFVDEGPSMKRIMPRAKGRADRILKRTSHITVVVSDR.

The protein belongs to the universal ribosomal protein uL22 family. In terms of assembly, part of the 50S ribosomal subunit.

Functionally, this protein binds specifically to 23S rRNA; its binding is stimulated by other ribosomal proteins, e.g. L4, L17, and L20. It is important during the early stages of 50S assembly. It makes multiple contacts with different domains of the 23S rRNA in the assembled 50S subunit and ribosome. The globular domain of the protein is located near the polypeptide exit tunnel on the outside of the subunit, while an extended beta-hairpin is found that lines the wall of the exit tunnel in the center of the 70S ribosome. This is Large ribosomal subunit protein uL22 from Klebsiella pneumoniae (strain 342).